Here is a 61-residue protein sequence, read N- to C-terminus: Small ribosomal subunit protein uS14B (61 aa).

Residues C24, C27, C40, and C43 each coordinate Zn(2+).

It belongs to the universal ribosomal protein uS14 family. Zinc-binding uS14 subfamily. Part of the 30S ribosomal subunit. Contacts proteins S3 and S10. The cofactor is Zn(2+).

Its function is as follows. Binds 16S rRNA, required for the assembly of 30S particles and may also be responsible for determining the conformation of the 16S rRNA at the A site. The sequence is that of Small ribosomal subunit protein uS14B from Pediococcus pentosaceus (strain ATCC 25745 / CCUG 21536 / LMG 10740 / 183-1w).